Reading from the N-terminus, the 251-residue chain is Ditrans,polycis-undecaprenyl-diphosphate synthase ((2E,6E)-farnesyl-diphosphate specific) (251 aa).

D21 is an active-site residue. A Mg(2+)-binding site is contributed by D21. Substrate-binding positions include 22-25, W26, H38, and 66-68; these read GNNR and SSE. N69 acts as the Proton acceptor in catalysis. Residues W70, R72, R189, and 195 to 197 each bind substrate; that span reads RIS. E208 contacts Mg(2+).

This sequence belongs to the UPP synthase family. Homodimer. Mg(2+) serves as cofactor.

The catalysed reaction is 8 isopentenyl diphosphate + (2E,6E)-farnesyl diphosphate = di-trans,octa-cis-undecaprenyl diphosphate + 8 diphosphate. Catalyzes the sequential condensation of isopentenyl diphosphate (IPP) with (2E,6E)-farnesyl diphosphate (E,E-FPP) to yield (2Z,6Z,10Z,14Z,18Z,22Z,26Z,30Z,34E,38E)-undecaprenyl diphosphate (di-trans,octa-cis-UPP). UPP is the precursor of glycosyl carrier lipid in the biosynthesis of bacterial cell wall polysaccharide components such as peptidoglycan and lipopolysaccharide. This Pseudomonas putida (strain ATCC 47054 / DSM 6125 / CFBP 8728 / NCIMB 11950 / KT2440) protein is Ditrans,polycis-undecaprenyl-diphosphate synthase ((2E,6E)-farnesyl-diphosphate specific).